Consider the following 947-residue polypeptide: MRFKALLRAIFRFRKTNFSILLIITYAIIIALLVFDRSRYKLDLPNATSDKLRRNLLEQAWSDLQVITQSPHPYSSRNNDVVHDFLLQRVKNITRSNDNIYIDDDYRNKSSILFHQPDVFNSTSKVSRVVYYESSNIIVKVVGSNNELPALLISGHFDSVPTSYGATDDGKGIATMLSLLNHFSSSQPKRSVIFNFNNNEEFGLLGAYAFTYHPWIRDIEYFINLEGMGAGDRAVLFRTSNVETAEIYKKAVKSRPFGNSIFQQGFNSRYIGSQTDYKVYDEYGLKGWDISFYKPRDYYHTAKDSIQYTSKESLWSMLNQSLQLAIYISNEKLIKKSSSNPAVFFDLLGLFFVVVDTKHLFYADIFMLIVGPILLMMKAHLDKRRRLERSRLVQLRLLLSLGLSVVFLLLLTKSLNSFNPFVYSADYRTPLTGLFLLFVTVNYLIVTLAERLNPTESYKTVAINQIFIIAWLMQLYITLRMAKSDFTLTGTYPLSIFSGCLIVALSLGLFGTKNKAVNDAPNSSVRYASSQNDEDNPLPSQDRGENINQVRDTGNQEVTSNTNTDLHSNAEEVDERMPLLSNNHIGDSGKMDKNSDFSKHYNWIVQFLCIVPISSFIFLFSLDYTLDAIHKMVQETTDDVQLICIIITIGVILLALPILPFISKLNYQSSVIIAIIGVLLFGKSLVMQPFSEIAPLKVRFLQTVNQHDISKSSVSLFTAKDTPIKEMIYDLPSVKSQSTLVNCTVFGGSKICDYYGLPPNLVDSEGNRQNKNLMKIEVLKNDNNDTQRSPYAPLSAEIKINVSENRVCSLAFWSQSSKQSPVKKFSVIKSNNNNTNSVSNSIKYADGIDEVLIHKLDFNGAHHFSIEWLPNIPFDLDYDPVIDGQGDNNIEITVACFTGEADSLSVVNGHPLKKIPAFDEVVKYSPKWYTFTNRDRGLVVIKDKIQL.

Topologically, residues 1–15 are cytoplasmic; sequence MRFKALLRAIFRFRK. A helical transmembrane segment spans residues 16-36; that stretch reads TNFSILLIITYAIIIALLVFD. Residues 37 to 358 lie on the Vacuolar side of the membrane; sequence RSRYKLDLPN…GLFFVVVDTK (322 aa). N-linked (GlcNAc...) asparagine glycosylation is found at asparagine 46, asparagine 92, asparagine 108, and asparagine 121. Zn(2+) is bound by residues histidine 156 and aspartate 168. Glutamate 200 serves as the catalytic Proton acceptor. Glutamate 201, glutamate 226, and histidine 300 together coordinate Zn(2+). Residue asparagine 319 is glycosylated (N-linked (GlcNAc...) asparagine). The helical transmembrane segment at 359 to 379 threads the bilayer; that stretch reads HLFYADIFMLIVGPILLMMKA. The Cytoplasmic portion of the chain corresponds to 380–391; it reads HLDKRRRLERSR. Residues 392 to 412 form a helical membrane-spanning segment; it reads LVQLRLLLSLGLSVVFLLLLT. The Vacuolar segment spans residues 413–428; sequence KSLNSFNPFVYSADYR. A helical transmembrane segment spans residues 429–449; that stretch reads TPLTGLFLLFVTVNYLIVTLA. Residues 450–458 are Cytoplasmic-facing; sequence ERLNPTESY. A helical membrane pass occupies residues 459–479; sequence KTVAINQIFIIAWLMQLYITL. The Vacuolar portion of the chain corresponds to 480–489; the sequence is RMAKSDFTLT. The helical transmembrane segment at 490–510 threads the bilayer; that stretch reads GTYPLSIFSGCLIVALSLGLF. Residues 511 to 601 are Cytoplasmic-facing; it reads GTKNKAVNDA…DKNSDFSKHY (91 aa). Composition is skewed to polar residues over residues 522–531 and 546–567; these read NSSVRYASSQ and NINQ…TDLH. The interval 522-573 is disordered; the sequence is NSSVRYASSQNDEDNPLPSQDRGENINQVRDTGNQEVTSNTNTDLHSNAEEV. Residues 602–622 traverse the membrane as a helical segment; that stretch reads NWIVQFLCIVPISSFIFLFSL. The Vacuolar segment spans residues 623 to 641; that stretch reads DYTLDAIHKMVQETTDDVQ. A helical membrane pass occupies residues 642-662; the sequence is LICIIITIGVILLALPILPFI. At 663-669 the chain is on the cytoplasmic side; that stretch reads SKLNYQS. Residues 670–690 traverse the membrane as a helical segment; it reads SVIIAIIGVLLFGKSLVMQPF. The Vacuolar portion of the chain corresponds to 691–947; the sequence is SEIAPLKVRF…LVVIKDKIQL (257 aa). N-linked (GlcNAc...) asparagine glycans are attached at residues asparagine 742, asparagine 784, asparagine 801, and asparagine 833.

This sequence belongs to the peptidase M28 family. Requires Zn(2+) as cofactor.

It localises to the vacuole membrane. Its function is as follows. May be involved in vacuolar sorting and osmoregulation. This Candida glabrata (strain ATCC 2001 / BCRC 20586 / JCM 3761 / NBRC 0622 / NRRL Y-65 / CBS 138) (Yeast) protein is Vacuolar membrane protease.